We begin with the raw amino-acid sequence, 270 residues long: Metallo-beta-lactamase type 2 (270 aa).

A signal peptide spans 1 to 28 (MELPNIMHPVAKLSTALAAALMLSGCMP). The Zn(2+) site is built by His120, His122, Asp124, His189, and Cys208. Residues Lys211 and Asn220 each coordinate substrate. Residue His250 coordinates Zn(2+).

The protein belongs to the metallo-beta-lactamase superfamily. Class-B beta-lactamase family. As to quaternary structure, monomer. Zn(2+) is required as a cofactor.

The protein resides in the periplasm. The enzyme catalyses a beta-lactam + H2O = a substituted beta-amino acid. Its activity is regulated as follows. Inhibits by captopril, thiorphan, dimercaprol and tiopronin. This enzyme is not susceptible to inactivation by the beta-lactamase-blocking agents clavulanic acid. In terms of biological role, confers resistance to the different beta-lactams antibiotics (penicillin, cephalosporin and carbapenem) via the hydrolysis of the beta-lactam ring. Does not confer resistance to the polymixin colistin or the fluoroquinolone ciprofloxacin. The sequence is that of Metallo-beta-lactamase type 2 from Klebsiella pneumoniae.